A 338-amino-acid polypeptide reads, in one-letter code: Tagatose 1,6-diphosphate aldolase (338 aa).

The protein belongs to the aldolase LacD family.

It carries out the reaction D-tagatofuranose 1,6-bisphosphate = D-glyceraldehyde 3-phosphate + dihydroxyacetone phosphate. It functions in the pathway carbohydrate metabolism; D-tagatose 6-phosphate degradation; D-glyceraldehyde 3-phosphate and glycerone phosphate from D-tagatose 6-phosphate: step 2/2. The chain is Tagatose 1,6-diphosphate aldolase from Listeria monocytogenes serovar 1/2a (strain ATCC BAA-679 / EGD-e).